The chain runs to 277 residues: MRYWGKLLGLVLGVMYAPGVVGALLGLLVGHMVDRALGAKRRGFFADQQTRQSLFFRTTFQVMGHLTKAKGRVTEVDIQLASQLMDRMQLHGAARTAAQQAFREGKESHFPLRKTLQEFRRVCFGRFDLIRIFLEIQLQAAFADGSLHPNERQVLYVIAEELGISRGQFDQFLRMFDGGRQFGGHGGWQGQQGGYSQSGYQRAPQGPTLEDACKVLGVNSSDDSVAIKRAYRKLMGEHHPDKLVAKGLPPEMMEMAKQKAQEIQAAYDLIKREKGFK.

Over 1 to 6 (MRYWGK) the chain is Periplasmic. A helical membrane pass occupies residues 7–31 (LLGLVLGVMYAPGVVGALLGLLVGH). Over 32-277 (MVDRALGAKR…DLIKREKGFK (246 aa)) the chain is Cytoplasmic. A J domain is found at 211–277 (DACKVLGVNS…DLIKREKGFK (67 aa)).

In terms of assembly, homodimer.

It localises to the cell inner membrane. Functionally, regulatory DnaK co-chaperone. Direct interaction between DnaK and DjlA is needed for the induction of the wcaABCDE operon, involved in the synthesis of a colanic acid polysaccharide capsule, possibly through activation of the RcsB/RcsC phosphotransfer signaling pathway. The colanic acid capsule may help the bacterium survive conditions outside the host. This Yersinia pseudotuberculosis serotype I (strain IP32953) protein is Co-chaperone protein DjlA.